The chain runs to 81 residues: Antimicrobial peptide D1 (81 aa).

Positions 1–31 are cleaved as a signal peptide; it reads MAKTVLGIHVTFLTLLFAVLLLNDVMYTPVE. 4 cysteine pairs are disulfide-bonded: C34/C81, C45/C66, C51/C75, and C55/C77.

Its function is as follows. Antimicrobial peptide probably active against fungi like B.sorokiniana, F.oxysporum, F.graminearum, F.avenaceum, B.cinerea, P.beta, P.infestans and P.debaryanum. This chain is Antimicrobial peptide D1, found in Stellaria media (Common chickweed).